Here is a 447-residue protein sequence, read N- to C-terminus: Phosphoglucosamine mutase (447 aa).

Ser-105 functions as the Phosphoserine intermediate in the catalytic mechanism. Mg(2+) is bound by residues Ser-105, Asp-244, Asp-246, and Asp-248. Ser-105 is subject to Phosphoserine.

Belongs to the phosphohexose mutase family. Mg(2+) is required as a cofactor. In terms of processing, activated by phosphorylation.

It carries out the reaction alpha-D-glucosamine 1-phosphate = D-glucosamine 6-phosphate. Its function is as follows. Catalyzes the conversion of glucosamine-6-phosphate to glucosamine-1-phosphate. This chain is Phosphoglucosamine mutase, found in Polynucleobacter asymbioticus (strain DSM 18221 / CIP 109841 / QLW-P1DMWA-1) (Polynucleobacter necessarius subsp. asymbioticus).